A 333-amino-acid polypeptide reads, in one-letter code: Foldase protein PrsA (333 aa).

A signal peptide spans 1–19; that stretch reads MKKRHLLIAGLACMTILGA. Cys-20 carries the N-palmitoyl cysteine lipid modification. The S-diacylglycerol cysteine moiety is linked to residue Cys-20. In terms of domain architecture, PpiC spans 155–245; that stretch reads LIEVEASHIL…YGYHIILVTD (91 aa). A disordered region spans residues 291–333; sequence GLFDLPDAPPVEDTPEIDGEDASDEAEDQAEDADENAEEEDES. Residues 303-333 show a composition bias toward acidic residues; the sequence is DTPEIDGEDASDEAEDQAEDADENAEEEDES.

It belongs to the PrsA family.

The protein localises to the cell membrane. It carries out the reaction [protein]-peptidylproline (omega=180) = [protein]-peptidylproline (omega=0). Plays a major role in protein secretion by helping the post-translocational extracellular folding of several secreted proteins. This chain is Foldase protein PrsA, found in Halalkalibacterium halodurans (strain ATCC BAA-125 / DSM 18197 / FERM 7344 / JCM 9153 / C-125) (Bacillus halodurans).